The following is a 397-amino-acid chain: Ribosomal RNA large subunit methyltransferase I (397 aa).

Residues 2-79 (SASIYLVKGR…KEETVDLDFF (78 aa)) form the PUA domain.

Belongs to the methyltransferase superfamily. RlmI family.

The protein resides in the cytoplasm. It catalyses the reaction cytidine(1962) in 23S rRNA + S-adenosyl-L-methionine = 5-methylcytidine(1962) in 23S rRNA + S-adenosyl-L-homocysteine + H(+). In terms of biological role, specifically methylates the cytosine at position 1962 (m5C1962) of 23S rRNA. This chain is Ribosomal RNA large subunit methyltransferase I, found in Aeromonas hydrophila subsp. hydrophila (strain ATCC 7966 / DSM 30187 / BCRC 13018 / CCUG 14551 / JCM 1027 / KCTC 2358 / NCIMB 9240 / NCTC 8049).